The primary structure comprises 584 residues: MTASITEIDSISEESNVESVSHLQHSPSFEKKGADFSISLNEKKDFASPITEEIPSPDGIATPEPETKKKLSFGARVWDLICSPGRQHDVCVAAPTQLVRSCDDYANSASTLVTNDDGTKTKVDSDEKKHKHKNVRDYIRFKHVDIGGRIFDLITRLAGTSFTFILMLIILIVWAIVGGIYRAPDNWQIVMQDGSSIQCYVSDTLLMRQQQNQHIQVLTMISQLRSRLLTTSRLLGPVLNDKTKISSVNVALMKDDVGDAEKLPTENWFDFICNYVSFMVGSIIFLVVYWIGIFIWIGFGRMLGWSDEWQLYINTAVAVELTFTSVFLQNVRHRHMKYIDRCVTSIFRIDSVIEEELRRMMGDKEPNEEITIKMDKINLGERSIDYYADLIGSGVGVVVSTCVFVAWIAIGNVMHWDSNWWLIIGTYTGLVGFLDGFVLRNVYFRESSKEATEIQTLIDEDYALYQKLDLPLPHEHITNYKSTFGGSLSQWIGWLCALPISVLFSVFVILGLIIAAGSLRFNETAQLFCNTPTMIIEGALLIVLIEAHNIANLKRRIQFRQIHLRRLTILKMLAGDNYSTTSTV.

Residues 1–28 are disordered; the sequence is MTASITEIDSISEESNVESVSHLQHSPS. The Extracellular portion of the chain corresponds to 1 to 160; the sequence is MTASITEIDS…FDLITRLAGT (160 aa). A helical membrane pass occupies residues 161–181; sequence SFTFILMLIILIVWAIVGGIY. At 182–277 the chain is on the cytoplasmic side; the sequence is RAPDNWQIVM…WFDFICNYVS (96 aa). The helical transmembrane segment at 278–298 threads the bilayer; sequence FMVGSIIFLVVYWIGIFIWIG. At 299-310 the chain is on the extracellular side; the sequence is FGRMLGWSDEWQ. The helical transmembrane segment at 311-331 threads the bilayer; sequence LYINTAVAVELTFTSVFLQNV. Over 332-389 the chain is Cytoplasmic; the sequence is RHRHMKYIDRCVTSIFRIDSVIEEELRRMMGDKEPNEEITIKMDKINLGERSIDYYAD. A helical transmembrane segment spans residues 390–410; the sequence is LIGSGVGVVVSTCVFVAWIAI. Over 411-418 the chain is Extracellular; sequence GNVMHWDS. Residues 419-439 form a helical membrane-spanning segment; sequence NWWLIIGTYTGLVGFLDGFVL. Residues 440 to 493 are Cytoplasmic-facing; the sequence is RNVYFRESSKEATEIQTLIDEDYALYQKLDLPLPHEHITNYKSTFGGSLSQWIG. A helical transmembrane segment spans residues 494–514; the sequence is WLCALPISVLFSVFVILGLII. Residues 515 to 526 are Extracellular-facing; that stretch reads AAGSLRFNETAQ. N-linked (GlcNAc...) asparagine glycosylation is present at N522. Residues 527-547 form a helical membrane-spanning segment; the sequence is LFCNTPTMIIEGALLIVLIEA. Residues 548–584 lie on the Cytoplasmic side of the membrane; it reads HNIANLKRRIQFRQIHLRRLTILKMLAGDNYSTTSTV.

The protein belongs to the FET4 family.

Its subcellular location is the golgi apparatus membrane. It is found in the cell membrane. Functionally, required for Fe(2+) ion low affinity uptake. Has a role in zinc uptake under conditions of zinc limitation. The protein is Low-affinity iron/zinc ion transport protein fet4 (fet4) of Schizosaccharomyces pombe (strain 972 / ATCC 24843) (Fission yeast).